A 230-amino-acid chain; its full sequence is RNA chaperone ProQ (230 aa).

Positions 104–176 (AEAKARVQAQ…APRQNTEKLT (73 aa)) are disordered. A compositionally biased stretch (basic and acidic residues) spans 115-132 (AEQRAKKREAEGDKETSK).

The protein belongs to the ProQ family.

Its subcellular location is the cytoplasm. Its function is as follows. RNA chaperone with significant RNA binding, RNA strand exchange and RNA duplexing activities. May regulate ProP activity through an RNA-based, post-transcriptional mechanism. This chain is RNA chaperone ProQ, found in Proteus mirabilis (strain HI4320).